The sequence spans 320 residues: Malate dehydrogenase (320 aa).

Residues 10–15 and aspartate 34 contribute to the NAD(+) site; that span reads GAGQIG. Arginine 83 and arginine 89 together coordinate substrate. NAD(+) contacts are provided by residues asparagine 96 and 119-121; that span reads ITN. Positions 121 and 152 each coordinate substrate. Catalysis depends on histidine 176, which acts as the Proton acceptor.

The protein belongs to the LDH/MDH superfamily. MDH type 3 family.

It carries out the reaction (S)-malate + NAD(+) = oxaloacetate + NADH + H(+). Functionally, catalyzes the reversible oxidation of malate to oxaloacetate. The sequence is that of Malate dehydrogenase from Cereibacter sphaeroides (strain ATCC 17025 / ATH 2.4.3) (Rhodobacter sphaeroides).